The sequence spans 185 residues: Elongation factor P (185 aa).

It belongs to the elongation factor P family.

Its subcellular location is the cytoplasm. It functions in the pathway protein biosynthesis; polypeptide chain elongation. Involved in peptide bond synthesis. Stimulates efficient translation and peptide-bond synthesis on native or reconstituted 70S ribosomes in vitro. Probably functions indirectly by altering the affinity of the ribosome for aminoacyl-tRNA, thus increasing their reactivity as acceptors for peptidyl transferase. This chain is Elongation factor P, found in Lachnoclostridium phytofermentans (strain ATCC 700394 / DSM 18823 / ISDg) (Clostridium phytofermentans).